A 198-amino-acid chain; its full sequence is MENTGSRELVIKEIKLFNKWSYDFIEVRDPSLKKYICLKPVYLPHTGGRHEHRRFGKTHVPIVERLINKVMRPGRNMGKKHLAYHIVKKAFDIIHIKTGENPIQVLVRAIENAAPREETTRIMYGGITYHVSVDVAPLRRIDLALRHLTEGARMKAFHSPIPIEEALAEEIVLAASNDPKSYAIQKKEEIERIALSSR.

The protein belongs to the universal ribosomal protein uS7 family. As to quaternary structure, part of the 30S ribosomal subunit.

Functionally, one of the primary rRNA binding proteins, it binds directly to 16S rRNA where it nucleates assembly of the head domain of the 30S subunit. Is located at the subunit interface close to the decoding center. The protein is Small ribosomal subunit protein uS7 of Desulfurococcus mucosus (Desulfurococcus mobilis).